The primary structure comprises 389 residues: NADH-quinone oxidoreductase subunit D (389 aa).

It belongs to the complex I 49 kDa subunit family. In terms of assembly, NDH-1 is composed of 14 different subunits. Subunits NuoB, C, D, E, F, and G constitute the peripheral sector of the complex.

It localises to the cell inner membrane. It carries out the reaction a quinone + NADH + 5 H(+)(in) = a quinol + NAD(+) + 4 H(+)(out). In terms of biological role, NDH-1 shuttles electrons from NADH, via FMN and iron-sulfur (Fe-S) centers, to quinones in the respiratory chain. The immediate electron acceptor for the enzyme in this species is believed to be ubiquinone. Couples the redox reaction to proton translocation (for every two electrons transferred, four hydrogen ions are translocated across the cytoplasmic membrane), and thus conserves the redox energy in a proton gradient. The chain is NADH-quinone oxidoreductase subunit D from Rickettsia prowazekii (strain Madrid E).